The primary structure comprises 269 residues: Ubiquinone/menaquinone biosynthesis C-methyltransferase UbiE (269 aa).

S-adenosyl-L-methionine-binding positions include Thr92, Asp113, and 141 to 142; that span reads NA.

Belongs to the class I-like SAM-binding methyltransferase superfamily. MenG/UbiE family.

It carries out the reaction a 2-demethylmenaquinol + S-adenosyl-L-methionine = a menaquinol + S-adenosyl-L-homocysteine + H(+). The catalysed reaction is a 2-methoxy-6-(all-trans-polyprenyl)benzene-1,4-diol + S-adenosyl-L-methionine = a 5-methoxy-2-methyl-3-(all-trans-polyprenyl)benzene-1,4-diol + S-adenosyl-L-homocysteine + H(+). Its pathway is quinol/quinone metabolism; menaquinone biosynthesis; menaquinol from 1,4-dihydroxy-2-naphthoate: step 2/2. It participates in cofactor biosynthesis; ubiquinone biosynthesis. In terms of biological role, methyltransferase required for the conversion of demethylmenaquinol (DMKH2) to menaquinol (MKH2) and the conversion of 2-polyprenyl-6-methoxy-1,4-benzoquinol (DDMQH2) to 2-polyprenyl-3-methyl-6-methoxy-1,4-benzoquinol (DMQH2). This is Ubiquinone/menaquinone biosynthesis C-methyltransferase UbiE from Brucella suis (strain ATCC 23445 / NCTC 10510).